A 389-amino-acid chain; its full sequence is Migration and invasion-inhibitory protein (389 aa).

A compositionally biased stretch (low complexity) spans 44–54; the sequence is LDYSSSSNNLE. Disordered regions lie at residues 44-80 and 131-150; these read LDYSSSSNNLEMPLSQETSASSVAPNSQDKRHVWDPL and KRPVSLGGPKGLGPDKAQVP. A compositionally biased stretch (polar residues) spans 58–70; sequence SQETSASSVAPNS. A compositionally biased stretch (basic and acidic residues) spans 71–80; the sequence is QDKRHVWDPL. At Ser-309 the chain carries Phosphoserine.

As to quaternary structure, interacts with IGFBP2.

Its function is as follows. Inhibits glioma cells invasion and down-regulates adhesion- and motility-associated genes such as NFKB2 and ICAM1. Exhibits opposing effects to IGFBP2 on cell invasion. The chain is Migration and invasion-inhibitory protein (Miip) from Rattus norvegicus (Rat).